Here is a 288-residue protein sequence, read N- to C-terminus: Elongation factor Ts (288 aa).

The segment at 79–82 is involved in Mg(2+) ion dislocation from EF-Tu; that stretch reads TDFV.

The protein belongs to the EF-Ts family.

The protein resides in the cytoplasm. Associates with the EF-Tu.GDP complex and induces the exchange of GDP to GTP. It remains bound to the aminoacyl-tRNA.EF-Tu.GTP complex up to the GTP hydrolysis stage on the ribosome. This chain is Elongation factor Ts, found in Ehrlichia canis (strain Jake).